The following is a 101-amino-acid chain: Cell division suppressor protein YneA (101 aa).

A LysM domain is found at 35 to 86; the sequence is MTVTVASGDTLWGLAKQYEPAHGLSPDEFIRWVVDVNRLPSSRLTAGEQIVI.

It belongs to the YneA family.

It is found in the cytoplasm. Its function is as follows. Inhibits cell division during the SOS response. Affects a later stage of the cell division protein assembly, after the assembly of the Z ring, by probably suppressing recruitment of FtsL and/or DivIC to the division machinery. The protein is Cell division suppressor protein YneA of Geobacillus thermodenitrificans (strain NG80-2).